The sequence spans 338 residues: Fructose-1,6-bisphosphatase class 1 (338 aa).

Residues Glu-94, Asp-116, Leu-118, and Asp-119 each contribute to the Mg(2+) site. Substrate contacts are provided by residues Asp-119–Ser-122, Asn-210, and Lys-276. Residue Glu-282 participates in Mg(2+) binding.

Belongs to the FBPase class 1 family. As to quaternary structure, homotetramer. The cofactor is Mg(2+).

It is found in the cytoplasm. The catalysed reaction is beta-D-fructose 1,6-bisphosphate + H2O = beta-D-fructose 6-phosphate + phosphate. Its pathway is carbohydrate biosynthesis; gluconeogenesis. In Burkholderia thailandensis (strain ATCC 700388 / DSM 13276 / CCUG 48851 / CIP 106301 / E264), this protein is Fructose-1,6-bisphosphatase class 1.